Consider the following 475-residue polypeptide: Glutamyl-tRNA(Gln) amidotransferase subunit A (475 aa).

Catalysis depends on charge relay system residues K66 and S141. The active-site Acyl-ester intermediate is S165.

This sequence belongs to the amidase family. GatA subfamily. As to quaternary structure, heterotrimer of A, B and C subunits.

It catalyses the reaction L-glutamyl-tRNA(Gln) + L-glutamine + ATP + H2O = L-glutaminyl-tRNA(Gln) + L-glutamate + ADP + phosphate + H(+). Its function is as follows. Allows the formation of correctly charged Gln-tRNA(Gln) through the transamidation of misacylated Glu-tRNA(Gln) in organisms which lack glutaminyl-tRNA synthetase. The reaction takes place in the presence of glutamine and ATP through an activated gamma-phospho-Glu-tRNA(Gln). The chain is Glutamyl-tRNA(Gln) amidotransferase subunit A (gatA) from Thermotoga maritima (strain ATCC 43589 / DSM 3109 / JCM 10099 / NBRC 100826 / MSB8).